A 141-amino-acid polypeptide reads, in one-letter code: Hemoglobin subunit alpha-D (141 aa).

Residues 1 to 141 (VLTHEDCELL…VGDMLAEKYR (141 aa)) form the Globin domain. Histidine 58 and histidine 87 together coordinate heme b.

It belongs to the globin family. As to quaternary structure, there are three forms of hemoglobin in Sphenodon: A, A' and D. Hb A is a tetramer of two alpha-A and two beta-1, Hb A' is a tetramer of two alpha-a and two beta-2, Hb D is a tetramer of two alpha-D and two beta-2. As to expression, red blood cells.

Functionally, involved in oxygen transport from the lung to the various peripheral tissues. This Sphenodon punctatus (Tuatara) protein is Hemoglobin subunit alpha-D (HBAD).